Consider the following 617-residue polypeptide: Electron transfer flavoprotein-ubiquinone oxidoreductase, mitochondrial (617 aa).

Residues Met-1 to Trp-33 constitute a mitochondrion transit peptide. Val-71–Ala-85 is an FAD binding site. An N6-acetyllysine modification is found at Lys-96. An intramembrane segment occupies Ile-109–Asp-130. 2 positions are modified to N6-acetyllysine: Lys-132 and Lys-223. Gly-305 and Gly-306 together coordinate a ubiquinone. Lys-357 bears the N6-acetyllysine mark. An intramembrane segment occupies Ile-428–Glu-447. Ser-551 carries the phosphoserine modification. Residues Cys-561, Cys-586, Cys-589, and Cys-592 each coordinate [4Fe-4S] cluster. Positions Phe-577 to Pro-606 constitute a 4Fe-4S ferredoxin-type domain.

The protein belongs to the ETF-QO/FixC family. In terms of assembly, monomer. [4Fe-4S] cluster is required as a cofactor. FAD serves as cofactor.

The protein resides in the mitochondrion inner membrane. The catalysed reaction is a ubiquinone + reduced [electron-transfer flavoprotein] = a ubiquinol + oxidized [electron-transfer flavoprotein] + H(+). In terms of biological role, accepts electrons from ETF and reduces ubiquinone. The chain is Electron transfer flavoprotein-ubiquinone oxidoreductase, mitochondrial (ETFDH) from Bos taurus (Bovine).